Here is a 208-residue protein sequence, read N- to C-terminus: Large ribosomal subunit protein bL25 (208 aa).

The span at 185–195 (DLEEETGEAEG) shows a compositional bias: acidic residues. Positions 185-208 (DLEEETGEAEGETAAAPAEEGAES) are disordered. Low complexity predominate over residues 196 to 208 (ETAAAPAEEGAES).

This sequence belongs to the bacterial ribosomal protein bL25 family. CTC subfamily. Part of the 50S ribosomal subunit; part of the 5S rRNA/L5/L18/L25 subcomplex. Contacts the 5S rRNA. Binds to the 5S rRNA independently of L5 and L18.

Functionally, this is one of the proteins that binds to the 5S RNA in the ribosome where it forms part of the central protuberance. This Rhodococcus opacus (strain B4) protein is Large ribosomal subunit protein bL25.